Consider the following 379-residue polypeptide: Acetylajmalan esterase 1 (379 aa).

Residues 1–20 (MGFAPLLVFSLFVFAGTTKG) form the signal peptide. Residue Ser-34 is the Nucleophile of the active site. Residues Asn-96, Asn-178, Asn-197, and Asn-291 are each glycosylated (N-linked (GlcNAc...) asparagine). Residues Asp-332 and His-335 contribute to the active site.

Belongs to the 'GDSL' lipolytic enzyme family. In terms of tissue distribution, expressed in roots and leaves at low levels.

It carries out the reaction 17-O-acetylnorajmaline + H2O = norajmaline + acetate + H(+). The enzyme catalyses 17-O-acetylajmaline + H2O = ajmaline + acetate + H(+). It functions in the pathway alkaloid biosynthesis; ajmaline biosynthesis. Functionally, acetylesterase involved in the biosynthesis of ajmaline-type monoterpenoid indole alkaloids (MIAs) natural products, important plant-derived pharmaceuticals used in the therapy of heart disorders. Deacetylates 17-O-acetylnorajmaline to produce norajmaline. May also catalyze the conversion of 17-O-acetylajmaline to ajmaline. The polypeptide is Acetylajmalan esterase 1 (Rauvolfia serpentina (Serpentine wood)).